We begin with the raw amino-acid sequence, 74 residues long: Large ribosomal subunit protein uL14c (74 aa).

Belongs to the universal ribosomal protein uL14 family. In terms of assembly, part of the 50S ribosomal subunit.

It localises to the plastid. Its subcellular location is the chloroplast. Its function is as follows. Binds to 23S rRNA. The protein is Large ribosomal subunit protein uL14c (rpl14) of Oenothera ammophila (Evening primerose).